A 166-amino-acid chain; its full sequence is Ribosome biogenesis regulatory protein homolog (166 aa).

S34 and S64 each carry phosphoserine. The interval K144–H166 is disordered. Basic residues predominate over residues T156–H166.

The protein belongs to the RRS1 family. As to quaternary structure, component of a hexameric 5S RNP precursor complex, composed of 5S RNA, rrs1, rpf2, rpl5a/rpl5b, rpl11a/rpl11b and syo1; this complex acts as a precursor for ribosome assembly. Interacts with sad1.

It localises to the nucleus. Its subcellular location is the nucleolus. Involved in ribosomal large subunit assembly. The polypeptide is Ribosome biogenesis regulatory protein homolog (Schizosaccharomyces pombe (strain 972 / ATCC 24843) (Fission yeast)).